The following is a 322-amino-acid chain: Cytochrome f (322 aa).

Residues 1-37 (MQNRKTYAYDWIKKWMIKSISTLIIINTMVWSSVSEA) form the signal peptide. Heme-binding residues include tyrosine 38, cysteine 58, cysteine 61, and histidine 62. The helical transmembrane segment at 285-307 (VLRVQGLLLFFASVILAQIFLVL) threads the bilayer.

Belongs to the cytochrome f family. As to quaternary structure, the 4 large subunits of the cytochrome b6-f complex are cytochrome b6, subunit IV (17 kDa polypeptide, petD), cytochrome f and the Rieske protein, while the 4 small subunits are PetG, PetL, PetM and PetN. The complex functions as a dimer. Heme is required as a cofactor.

The protein resides in the plastid. Its subcellular location is the chloroplast thylakoid membrane. Functionally, component of the cytochrome b6-f complex, which mediates electron transfer between photosystem II (PSII) and photosystem I (PSI), cyclic electron flow around PSI, and state transitions. The chain is Cytochrome f (petA) from Anthoceros angustus (Hornwort).